The primary structure comprises 352 residues: Quinolinate synthase (352 aa).

Residues histidine 55 and serine 72 each contribute to the iminosuccinate site. [4Fe-4S] cluster is bound at residue cysteine 117. Residues 143–145 (YVN) and serine 160 contribute to the iminosuccinate site. Cysteine 204 contacts [4Fe-4S] cluster. Iminosuccinate is bound by residues 230 to 232 (HPE) and threonine 258. Residue cysteine 303 participates in [4Fe-4S] cluster binding.

The protein belongs to the quinolinate synthase family. Type 2 subfamily. [4Fe-4S] cluster serves as cofactor.

Its subcellular location is the cytoplasm. It catalyses the reaction iminosuccinate + dihydroxyacetone phosphate = quinolinate + phosphate + 2 H2O + H(+). It participates in cofactor biosynthesis; NAD(+) biosynthesis; quinolinate from iminoaspartate: step 1/1. Catalyzes the condensation of iminoaspartate with dihydroxyacetone phosphate to form quinolinate. The protein is Quinolinate synthase of Mycobacterium leprae (strain Br4923).